Reading from the N-terminus, the 198-residue chain is Probable GTP-binding protein EngB (198 aa).

The EngB-type G domain maps to 21-195 (NFSEVAFLGR…EDIIINQTLG (175 aa)). GTP is bound by residues 29 to 36 (GRSNVGKS), 56 to 60 (GKTQL), 81 to 84 (DLPG), 151 to 154 (TKCD), and 174 to 176 (VSN). The Mg(2+) site is built by Ser-36 and Thr-58.

The protein belongs to the TRAFAC class TrmE-Era-EngA-EngB-Septin-like GTPase superfamily. EngB GTPase family. It depends on Mg(2+) as a cofactor.

Necessary for normal cell division and for the maintenance of normal septation. This Campylobacter jejuni subsp. jejuni serotype O:23/36 (strain 81-176) protein is Probable GTP-binding protein EngB.